The sequence spans 545 residues: Sensory neuron membrane protein 1 (545 aa).

Topologically, residues 1–10 (MELKERNFKK) are cytoplasmic. A helical membrane pass occupies residues 11 to 31 (IGLICVAVLLCGMVFSYGIFP). Over 32-464 (SILRFMIKQN…LFLGLKFNAT (433 aa)) the chain is Extracellular. Residues N69, N214, and N227 are each glycosylated (N-linked (GlcNAc...) asparagine). Cystine bridges form between C266–C331, C295–C351, and C333–C340. Residues N444 and N462 are each glycosylated (N-linked (GlcNAc...) asparagine). A helical transmembrane segment spans residues 465–485 (VKWLTIIIGTVGAVGSAYMYF). The Cytoplasmic segment spans residues 486–545 (RKETKTTDVAPVDVSTPDTNPSSAKDGVVNVSLGRNLPPVIDGLDKPPKLRATELQQERY).

It belongs to the CD36 family. In terms of tissue distribution, selectively expressed in antenna.

The protein localises to the cell membrane. Plays an olfactory role that is not restricted to pheromone sensitivity. The chain is Sensory neuron membrane protein 1 (snmp1) from Anopheles gambiae (African malaria mosquito).